A 624-amino-acid chain; its full sequence is Chaperone protein HtpG (624 aa).

The a; substrate-binding stretch occupies residues 1–336 (MKGQETRGFQ…SNDLPLNVSR (336 aa)). Positions 337–552 (EILQDSSVTR…ADEMSTQMAK (216 aa)) are b. Positions 553 to 624 (LFAAAGQAAP…IRRMNQLLAS (72 aa)) are c.

Belongs to the heat shock protein 90 family. Homodimer.

Its subcellular location is the cytoplasm. Its function is as follows. Molecular chaperone. Has ATPase activity. This chain is Chaperone protein HtpG, found in Klebsiella pneumoniae subsp. pneumoniae (strain ATCC 700721 / MGH 78578).